The primary structure comprises 714 residues: Glycine--tRNA ligase beta subunit (714 aa).

This sequence belongs to the class-II aminoacyl-tRNA synthetase family. In terms of assembly, tetramer of two alpha and two beta subunits.

Its subcellular location is the cytoplasm. It catalyses the reaction tRNA(Gly) + glycine + ATP = glycyl-tRNA(Gly) + AMP + diphosphate. This chain is Glycine--tRNA ligase beta subunit, found in Rhodospirillum centenum (strain ATCC 51521 / SW).